The following is a 304-amino-acid chain: Protease HtpX homolog (304 aa).

2 helical membrane passes run 14-34 and 39-59; these read VFIV…IGII and YLNG…IMVM. His144 provides a ligand contact to Zn(2+). Glu145 is a catalytic residue. His148 contributes to the Zn(2+) binding site. Transmembrane regions (helical) follow at residues 161–181 and 202–222; these read IALV…IFWG and LIIY…ATAI. Position 231 (Glu231) interacts with Zn(2+). Positions 276 to 295 are disordered; that stretch reads SPLKSKKDKPGIFDSHPPIS.

Belongs to the peptidase M48B family. Requires Zn(2+) as cofactor.

Its subcellular location is the cell membrane. The sequence is that of Protease HtpX homolog from Listeria welshimeri serovar 6b (strain ATCC 35897 / DSM 20650 / CCUG 15529 / CIP 8149 / NCTC 11857 / SLCC 5334 / V8).